The sequence spans 243 residues: Pyridoxine 5'-phosphate synthase (243 aa).

Residue N7 participates in 3-amino-2-oxopropyl phosphate binding. 9–10 (DH) serves as a coordination point for 1-deoxy-D-xylulose 5-phosphate. R18 contacts 3-amino-2-oxopropyl phosphate. Residue H43 is the Proton acceptor of the active site. 1-deoxy-D-xylulose 5-phosphate is bound by residues R45 and H50. Catalysis depends on E70, which acts as the Proton acceptor. A 1-deoxy-D-xylulose 5-phosphate-binding site is contributed by T100. H190 acts as the Proton donor in catalysis. 3-amino-2-oxopropyl phosphate contacts are provided by residues G191 and 212–213 (GH).

The protein belongs to the PNP synthase family. As to quaternary structure, homooctamer; tetramer of dimers.

It localises to the cytoplasm. It carries out the reaction 3-amino-2-oxopropyl phosphate + 1-deoxy-D-xylulose 5-phosphate = pyridoxine 5'-phosphate + phosphate + 2 H2O + H(+). It functions in the pathway cofactor biosynthesis; pyridoxine 5'-phosphate biosynthesis; pyridoxine 5'-phosphate from D-erythrose 4-phosphate: step 5/5. In terms of biological role, catalyzes the complicated ring closure reaction between the two acyclic compounds 1-deoxy-D-xylulose-5-phosphate (DXP) and 3-amino-2-oxopropyl phosphate (1-amino-acetone-3-phosphate or AAP) to form pyridoxine 5'-phosphate (PNP) and inorganic phosphate. The chain is Pyridoxine 5'-phosphate synthase from Prochlorococcus marinus (strain MIT 9211).